Reading from the N-terminus, the 323-residue chain is Formimidoylglutamase (323 aa).

6 residues coordinate Mn(2+): His-131, Asp-157, His-159, Asp-161, Cys-245, and Asp-247.

The protein belongs to the arginase family. Mn(2+) is required as a cofactor.

The enzyme catalyses N-formimidoyl-L-glutamate + H2O = formamide + L-glutamate. Its pathway is amino-acid degradation; L-histidine degradation into L-glutamate; L-glutamate from N-formimidoyl-L-glutamate (hydrolase route): step 1/1. Catalyzes the conversion of N-formimidoyl-L-glutamate to L-glutamate and formamide. The chain is Formimidoylglutamase from Geobacillus kaustophilus (strain HTA426).